The following is a 271-amino-acid chain: ATP synthase subunit a (271 aa).

5 consecutive transmembrane segments (helical) span residues 47-67 (WENI…AYLG), 107-127 (FLGT…VPLM), 133-153 (SLNI…FLNI), 209-229 (ILIG…ETFV), and 235-255 (LPFM…FTLL).

It belongs to the ATPase A chain family. In terms of assembly, F-type ATPases have 2 components, CF(1) - the catalytic core - and CF(0) - the membrane proton channel. CF(1) has five subunits: alpha(3), beta(3), gamma(1), delta(1), epsilon(1). CF(0) has three main subunits: a(1), b(2) and c(9-12). The alpha and beta chains form an alternating ring which encloses part of the gamma chain. CF(1) is attached to CF(0) by a central stalk formed by the gamma and epsilon chains, while a peripheral stalk is formed by the delta and b chains.

The protein resides in the cell inner membrane. Its function is as follows. Key component of the proton channel; it plays a direct role in the translocation of protons across the membrane. The sequence is that of ATP synthase subunit a from Protochlamydia amoebophila (strain UWE25).